Reading from the N-terminus, the 482-residue chain is Histone deacetylase 1 (482 aa).

Residues 9–321 are histone deacetylase; the sequence is RKVCYYYDGD…WTYETAVALD (313 aa). 1D-myo-inositol 1,4,5,6-tetrakisphosphate is bound by residues G27 and K31. K74 is modified (N6-acetyllysine; alternate). A Glycyl lysine isopeptide (Lys-Gly) (interchain with G-Cter in SUMO2); alternate cross-link involves residue K74. H141 is an active-site residue. Positions 176 and 178 each coordinate Zn(2+). N6-acetyllysine is present on K220. An S-nitrosocysteine modification is found at C261. D264 is a Zn(2+) binding site. R270 contributes to the 1D-myo-inositol 1,4,5,6-tetrakisphosphate binding site. An S-nitrosocysteine modification is found at C273. Residues 390-400 are compositionally biased toward acidic residues; sequence PEESGDEDEED. The disordered stretch occupies residues 390–482; sequence PEESGDEDEE…KGVKEEVKLA (93 aa). Phosphoserine occurs at positions 393, 406, 409, 421, and 423. Residues 401 to 416 are compositionally biased toward basic and acidic residues; the sequence is PDKRISICSSDKRIAC. Over residues 417–427 the composition is skewed to acidic residues; it reads EEEFSDSDEEG. N6-methylated lysine; by EHMT2 is present on K432. A Glycyl lysine isopeptide (Lys-Gly) (interchain with G-Cter in SUMO2) cross-link involves residue K438. Positions 443–482 are enriched in basic and acidic residues; sequence VKTEDEKEKDPEEKKEVTEEEKTKEEKQEAKGVKEEVKLA. Residue K444 forms a Glycyl lysine isopeptide (Lys-Gly) (interchain with G-Cter in SUMO2); alternate linkage. A Glycyl lysine isopeptide (Lys-Gly) (interchain with G-Cter in SUMO); alternate cross-link involves residue K444. Glycyl lysine isopeptide (Lys-Gly) (interchain with G-Cter in SUMO2) cross-links involve residues K456, K457, and K473. K476 is covalently cross-linked (Glycyl lysine isopeptide (Lys-Gly) (interchain with G-Cter in SUMO2); alternate). Residue K476 forms a Glycyl lysine isopeptide (Lys-Gly) (interchain with G-Cter in SUMO); alternate linkage. K480 is covalently cross-linked (Glycyl lysine isopeptide (Lys-Gly) (interchain with G-Cter in SUMO2)).

It belongs to the histone deacetylase family. HD type 1 subfamily. As to quaternary structure, part of the core histone deacetylase (HDAC) complex composed of HDAC1, HDAC2, RBBP4 and RBBP7, the core complex associates with SIN3, SAP18 and SAP30 to form the SIN3 HDAC complex. Component of the nucleosome remodeling and deacetylase (NuRD) repressor complex, composed of core proteins MTA1, MTA2, MTA3, RBBP4, RBBP7, HDAC1, HDAC2, MBD2, MBD3, and peripherally associated proteins CDK2AP1, CDK2AP2, GATAD2A, GATAD2B, CHD3, CHD4 and CHD5. The exact stoichiometry of the NuRD complex is unknown, and some subunits such as MBD2 and MBD3, GATAD2A and GATAD2B, and CHD3, CHD4 and CHD5 define mutually exclusive NuRD complexes. Component of a BHC histone deacetylase complex that contains HDAC1, HDAC2, HMG20B/BRAF35, KDM1A, RCOR1/CoREST and PHF21A/BHC80. The BHC complex may also contain ZMYM2, ZNF217, ZMYM3, GSE1 and GTF2I. Component of a mSin3A corepressor complex that contains SIN3A, SAP130, SUDS3/SAP45, ARID4B/SAP180, HDAC1 and HDAC2. Found in a trimeric complex with APBB1 and TSHZ3; the interaction between HDAC1 and APBB1 is mediated by TSHZ3. Forms a complex comprising APPL1, RUVBL2, APPL2, CTNNB1 and HDAC2. Component of a RCOR/GFI/KDM1A/HDAC complex. Part of a complex composed of TRIM28, HDAC1, HDAC2 and EHMT2. Part of a complex containing at least CDYL, MIER1, MIER2, HDAC1 and HDAC2. The large PER complex involved in the histone deacetylation is composed of at least HDAC1, PER2, SFPQ and SIN3A. Associates with the 9-1-1 complex; interacts with HUS1. Found in a complex with DNMT3A and HDAC7. Found in a complex with YY1, SIN3A and GON4L. Identified in a histone deacetylase complex that contains DNTTIP1, HDAC1 and MIDEAS; this complex assembles into a tetramer that contains four copies of each protein chain. Found in a complex composed of at least SINHCAF, SIN3A, HDAC1, SAP30, RBBP4, OGT and TET1. Component of the SIN3B complex, which includes SIN3B, HDAC1, PHF12 and MORF4L1. Interacts with GFI1; the interaction is direct. Interacts directly with GFI1B. Interacts with TSHZ3 (via N-terminus); the interaction is direct. Interacts with APEX1; the interaction is not dependent on the acetylated status of APEX1. Interacts with BANP. Interacts with BAZ2A/TIP5. Interacts with BCL6. Interacts with BCOR. Interacts with BHLHE40/DEC1. Interacts with BRCC3; this interaction is enhanced in the presence of PWWP2B. Interacts with BRMS1. Interacts with BRMS1L. Interacts with C10orf90/FATS (via its N-terminal); the interaction prevents binding of HDAC1 to CDKN1A/p21 and facilitates the acetylation and stabilization of CDKN1A/p21. Interacts with CBFA2T3. Interacts with CCAR2. Interacts with CDK2AP1. Interacts with CHD3. Interacts with CHD4. Interacts with CHFR. Interacts with CIART. Interacts with CDKN1A/p21. Interacts with CDK5 complexed to CDK5R1 (p25). Interacts with CRY1. Interacts with DAXX. Interacts with DDIT3/CHOP. Interacts with DDX5. Interacts with DHX36; this interaction occurs in a RNA-dependent manner. Interacts with DNMT1. Interacts with DNTTIP1. Interacts with E4F1. Interacts with EP300. Interacts with ERCC6. Interacts with GATAD2A. Interacts with HCFC1. Interacts with HDAC9. Interacts with HUS1. Interacts with INSM1. Interacts with KDM4A. Interacts with KDM5A; this interaction impairs histone deacetylation. Interacts with KDM5B. Interacts with KLF1. Interacts with MBD3L2. Interacts with MIER1. Interacts with NFE4. Interacts with NR4A2/NURR1. Interacts with NR1D2 (via C-terminus). Interacts with NRIP1. Interacts with NSD2. Interacts with PACS2. Interacts with PHB2. Interacts with PPHLN1. Interacts with PRDM6. Interacts with PRDM16. Interacts with PWWP2A in a MTA1-dependent manner. Interacts with PWWP2B. Interacts with RB1. Interacts with RERE. Interacts with SANBR (via the BTB domain). Interacts with SAMSN1. Interacts with SAP30L. Interacts with SETDB1. Interacts with SIN3A. Interacts with SMAD3. Interacts with SMAD4; positively regulated by ZBTB7A. Interacts with SMARCAD1. Interacts with SMARCA4/BRG1. Interacts with SMYD2. Interacts with SMYD4 (via MYND-type zinc finger). Interacts with SP1; the interaction deacetylates SP1 and regulates its transcriptional activity. Interacts with SP3; the interaction deacetylates SP3 and regulates its transcriptional activity. In vitro, C(18) ceramides increase this interaction and the subsequent SP3 deacetylation and SP3-mediated repression of the TERT promoter. Interacts with SPEN/MINT. Interacts with SPHK2. Interacts with SUV39H1. Interacts with TGIF. Interacts with TGIF2. Interacts with TRAF6. Interacts with TRIM28; the interaction recruits HDAC1 to E2F1 and inhibits its acetylation. Interacts with TSC22D3 isoform 1; this interaction affects HDAC1 activity on MYOG promoter and thus inhibits MYOD1 transcriptional activity. Interacts with UHRF1. Interacts with UHRF2. Interacts with ZBTB7A. Interacts with ZMYND8. Interacts with ZMYND15. Interacts with ZNF431. Interacts with ZNF516; this interaction is enhanced in the presence of PWWP2B. Interacts with ZNF541. Interacts with ZNF638. Interacts with ZNHIT1. Interacts with the non-histone region of MACROH2A1. Identified in a complex with HDAC2, KCTD19, DNTTIP1 and ZNF541. Interacts with MSX3. Interacts with VRK1. The cofactor is Zn(2+). Post-translationally, sumoylated on Lys-444 and Lys-476; which promotes enzymatic activity. Desumoylated by SENP1. In terms of processing, phosphorylation on Ser-421 and Ser-423 promotes enzymatic activity and interactions with NuRD and SIN3 complexes. Phosphorylated by CDK5. Ubiquitinated by CHFR and KCTD11, leading to its degradation by the proteasome.

It is found in the nucleus. The catalysed reaction is N(6)-acetyl-L-lysyl-[histone] + H2O = L-lysyl-[histone] + acetate. The enzyme catalyses N(6)-acetyl-L-lysyl-[protein] + H2O = L-lysyl-[protein] + acetate. It carries out the reaction N(6)-(2E)-butenoyl-L-lysyl-[protein] + H2O = (2E)-2-butenoate + L-lysyl-[protein]. It catalyses the reaction N(6)-[(S)-lactoyl]-L-lysyl-[protein] + H2O = (S)-lactate + L-lysyl-[protein]. With respect to regulation, inositol tetraphosphate (1D-myo-inositol 1,4,5,6-tetrakisphosphate) may act as an intermolecular glue between HDAC1 and N-Cor repressor complex components. Its function is as follows. Histone deacetylase that catalyzes the deacetylation of lysine residues on the N-terminal part of the core histones (H2A, H2B, H3 and H4). Histone deacetylation gives a tag for epigenetic repression and plays an important role in transcriptional regulation, cell cycle progression and developmental events. Histone deacetylases act via the formation of large multiprotein complexes. Acts as a component of the histone deacetylase NuRD complex which participates in the remodeling of chromatin. As part of the SIN3B complex is recruited downstream of the constitutively active genes transcriptional start sites through interaction with histones and mitigates histone acetylation and RNA polymerase II progression within transcribed regions contributing to the regulation of transcription. Also functions as a deacetylase for non-histone targets, such as NR1D2, RELA, SP1, SP3, STAT3 and TSHZ3. Deacetylates SP proteins, SP1 and SP3, and regulates their function. Component of the BRG1-RB1-HDAC1 complex, which negatively regulates the CREST-mediated transcription in resting neurons. Upon calcium stimulation, HDAC1 is released from the complex and CREBBP is recruited, which facilitates transcriptional activation. Deacetylates TSHZ3 and regulates its transcriptional repressor activity. Deacetylates 'Lys-310' in RELA and thereby inhibits the transcriptional activity of NF-kappa-B. Deacetylates NR1D2 and abrogates the effect of KAT5-mediated relieving of NR1D2 transcription repression activity. Component of a RCOR/GFI/KDM1A/HDAC complex that suppresses, via histone deacetylase (HDAC) recruitment, a number of genes implicated in multilineage blood cell development. Involved in CIART-mediated transcriptional repression of the circadian transcriptional activator: CLOCK-BMAL1 heterodimer. Required for the transcriptional repression of circadian target genes, such as PER1, mediated by the large PER complex or CRY1 through histone deacetylation. In addition to protein deacetylase activity, also has protein-lysine deacylase activity: acts as a protein decrotonylase and delactylase by mediating decrotonylation ((2E)-butenoyl) and delactylation (lactoyl) of histones, respectively. The sequence is that of Histone deacetylase 1 (HDAC1) from Bos taurus (Bovine).